A 283-amino-acid chain; its full sequence is 2-dehydro-3-deoxyphosphooctonate aldolase (283 aa).

The protein belongs to the KdsA family.

Its subcellular location is the cytoplasm. The catalysed reaction is D-arabinose 5-phosphate + phosphoenolpyruvate + H2O = 3-deoxy-alpha-D-manno-2-octulosonate-8-phosphate + phosphate. It participates in carbohydrate biosynthesis; 3-deoxy-D-manno-octulosonate biosynthesis; 3-deoxy-D-manno-octulosonate from D-ribulose 5-phosphate: step 2/3. It functions in the pathway bacterial outer membrane biogenesis; lipopolysaccharide biosynthesis. This is 2-dehydro-3-deoxyphosphooctonate aldolase from Methylococcus capsulatus (strain ATCC 33009 / NCIMB 11132 / Bath).